The sequence spans 225 residues: Small ribosomal subunit protein uS5 (225 aa).

One can recognise an S5 DRBM domain in the interval 57-120 (LEEQVLDVKL…AHAKLSLIKV (64 aa)).

It belongs to the universal ribosomal protein uS5 family. In terms of assembly, part of the 30S ribosomal subunit. Contacts protein S4.

Functionally, with S4 and S12 plays an important role in translational accuracy. The chain is Small ribosomal subunit protein uS5 from Methanococcus maripaludis (strain DSM 14266 / JCM 13030 / NBRC 101832 / S2 / LL).